The following is a 54-amino-acid chain: Large ribosomal subunit protein bL32c (54 aa).

The protein belongs to the bacterial ribosomal protein bL32 family.

The protein localises to the plastid. It is found in the chloroplast. In Gossypium barbadense (Sea Island cotton), this protein is Large ribosomal subunit protein bL32c.